The chain runs to 414 residues: Carbohydrate sulfotransferase 12 (414 aa).

Over 1–5 the chain is Cytoplasmic; that stretch reads MTKAR. The chain crosses the membrane as a helical; Signal-anchor for type II membrane protein span at residues 6–26; that stretch reads LFRLWLVLGSVFMILLIIVYW. The Lumenal segment spans residues 27–414; the sequence is DSAGAAHFYL…YPKPENLLRD (388 aa). The tract at residues 80-125 is disordered; the sequence is QSDLPRKETEQPPAPGSMEESVRGYDWSPRDARRSPDQGRQQAERR. Residues 99–125 are compositionally biased toward basic and acidic residues; that stretch reads ESVRGYDWSPRDARRSPDQGRQQAERR. N134 is a glycosylation site (N-linked (GlcNAc...) asparagine). 3'-phosphoadenylyl sulfate is bound at residue 171 to 177; sequence PKVACTN. A glycan (N-linked (GlcNAc...) asparagine) is linked at N209. Position 245 to 253 (245 to 253) interacts with 3'-phosphoadenylyl sulfate; it reads RDPFVRLIS. 2 N-linked (GlcNAc...) asparagine glycosylation sites follow: N280 and N370.

It belongs to the sulfotransferase 2 family. Widely expressed. Expressed a high level in spinal chord, heart, spleen, thyroid, pituitary gland, adrenal gland, peripheral blood leukocytes, thymus, lung, small intestine, fetal kidney, fetal spleen and fetal lung.

It localises to the golgi apparatus membrane. It catalyses the reaction chondroitin beta-D-glucuronate + n 3'-phosphoadenylyl sulfate = chondroitin 4'-sulfate + n adenosine 3',5'-bisphosphate + n H(+). Functionally, catalyzes the transfer of sulfate to position 4 of the N-acetylgalactosamine (GalNAc) residue of chondroitin and desulfated dermatan sulfate. Chondroitin sulfate constitutes the predominant proteoglycan present in cartilage and is distributed on the surfaces of many cells and extracellular matrices. Activity toward partially desulfated dermatan sulfate is however lower. Does not form 4, 6-di-O-sulfated GalNAc when chondroitin sulfate C is used as an acceptor. This is Carbohydrate sulfotransferase 12 (CHST12) from Homo sapiens (Human).